The sequence spans 369 residues: Phospho-N-acetylmuramoyl-pentapeptide-transferase (369 aa).

Transmembrane regions (helical) follow at residues 3-23 (ALLF…PLFI), 53-73 (GGIV…LLTW), 81-101 (VTPS…VGFL), 118-138 (WQKI…AITL), 162-182 (FMAL…CLIV), 198-218 (LAAG…FWQF), 240-260 (PLDL…FLWW), 267-287 (IFMG…LAIL), 290-310 (TELL…SVVL), and 347-367 (FWII…LEWI).

Belongs to the glycosyltransferase 4 family. MraY subfamily. Requires Mg(2+) as cofactor.

Its subcellular location is the cell membrane. It catalyses the reaction UDP-N-acetyl-alpha-D-muramoyl-L-alanyl-gamma-D-glutamyl-meso-2,6-diaminopimeloyl-D-alanyl-D-alanine + di-trans,octa-cis-undecaprenyl phosphate = di-trans,octa-cis-undecaprenyl diphospho-N-acetyl-alpha-D-muramoyl-L-alanyl-D-glutamyl-meso-2,6-diaminopimeloyl-D-alanyl-D-alanine + UMP. It functions in the pathway cell wall biogenesis; peptidoglycan biosynthesis. In terms of biological role, catalyzes the initial step of the lipid cycle reactions in the biosynthesis of the cell wall peptidoglycan: transfers peptidoglycan precursor phospho-MurNAc-pentapeptide from UDP-MurNAc-pentapeptide onto the lipid carrier undecaprenyl phosphate, yielding undecaprenyl-pyrophosphoryl-MurNAc-pentapeptide, known as lipid I. In Clavibacter michiganensis subsp. michiganensis (strain NCPPB 382), this protein is Phospho-N-acetylmuramoyl-pentapeptide-transferase.